The chain runs to 143 residues: Nucleoside diphosphate kinase (143 aa).

ATP is bound by residues Lys-11, Phe-59, Arg-87, Thr-93, Arg-104, and Asn-114. The Pros-phosphohistidine intermediate role is filled by His-117.

The protein belongs to the NDK family. Homotetramer. It depends on Mg(2+) as a cofactor.

The protein localises to the cytoplasm. The catalysed reaction is a 2'-deoxyribonucleoside 5'-diphosphate + ATP = a 2'-deoxyribonucleoside 5'-triphosphate + ADP. It catalyses the reaction a ribonucleoside 5'-diphosphate + ATP = a ribonucleoside 5'-triphosphate + ADP. Functionally, major role in the synthesis of nucleoside triphosphates other than ATP. The ATP gamma phosphate is transferred to the NDP beta phosphate via a ping-pong mechanism, using a phosphorylated active-site intermediate. The sequence is that of Nucleoside diphosphate kinase from Shewanella denitrificans (strain OS217 / ATCC BAA-1090 / DSM 15013).